Here is an 881-residue protein sequence, read N- to C-terminus: Putative cation exchanger C521.04c (881 aa).

A compositionally biased stretch (polar residues) spans Met1–Gln19. Disordered regions lie at residues Met1 to Leu39 and Ala52 to Glu142. Over residues Asn63–Thr77 the composition is skewed to basic and acidic residues. A compositionally biased stretch (polar residues) spans Arg83–Arg95. The span at Arg99–Arg113 shows a compositional bias: low complexity. Position 129 is a phosphoserine (Ser129). The next 8 helical transmembrane spans lie at Ile200–Phe220, Leu329–Val349, Ile407–Phe427, Val438–Ala458, Gly471–Leu491, Ile504–Ile524, Gly537–Phe557, and Leu594–Phe614. Positions Val641–Pro717 are disordered. Residues Asn646–Ser657 show a composition bias toward polar residues. Residues Ser678 to Asn688 show a composition bias toward low complexity. 5 consecutive transmembrane segments (helical) span residues Ile726–Val746, Leu762–Leu782, Ser794–Phe814, Leu828–Leu848, and Tyr859–Phe879.

This sequence belongs to the Ca(2+):cation antiporter (CaCA) (TC 2.A.19) family.

It localises to the endoplasmic reticulum membrane. Functionally, putative cation exchanger. This Schizosaccharomyces pombe (strain 972 / ATCC 24843) (Fission yeast) protein is Putative cation exchanger C521.04c.